Here is a 130-residue protein sequence, read N- to C-terminus: Small ribosomal subunit protein uS11c (130 aa).

The protein belongs to the universal ribosomal protein uS11 family. Part of the 30S ribosomal subunit.

It is found in the plastid. The protein localises to the chloroplast. This chain is Small ribosomal subunit protein uS11c, found in Porphyra purpurea (Red seaweed).